Here is a 1035-residue protein sequence, read N- to C-terminus: Cell-division control histidine kinase PdhS (1035 aa).

The interval 1 to 613 (MSGSYPFIDI…HADGSEEPVD (613 aa)) is important for polar localization. Residues 500–533 (QGLANTRAESETPVSETSSIEPVEPTPPVKTRSE) are disordered. The interval 614-1035 (AHLNAIAWRG…VFPPTRVLAD (422 aa)) is interaction with DivK. The PAS domain maps to 659–730 (HVEELKTILD…YLHGLSGNGV (72 aa)). The Histidine kinase domain maps to 802–1031 (RISHEIRTPL…VVEIVFPPTR (230 aa)). H805 is modified (phosphohistidine; by autocatalysis).

Interacts with DivK.

It localises to the cytoplasm. The catalysed reaction is ATP + protein L-histidine = ADP + protein N-phospho-L-histidine.. Its function is as follows. Functions as a polar differentiation marker. Essential protein that, by localizing in the old pole of dividing cells, controls cell division and maturation, probably through control of DivK phosphorylation status and cellular distribution, which in turn regulates CtrA, a transcriptional regulator of the minB operon. The asymmetrical localization of this protein is probably required for cells to enter a new division cycle. This Brucella melitensis biotype 1 (strain ATCC 23456 / CCUG 17765 / NCTC 10094 / 16M) protein is Cell-division control histidine kinase PdhS (pdhS).